The primary structure comprises 374 residues: Chaperone protein DnaJ (374 aa).

The 66-residue stretch at 5–70 folds into the J domain; it reads DYYEVLGVER…SKRAAYDQYG (66 aa). The segment at 133-211 adopts a CR-type zinc-finger fold; it reads GTTVNIRVPT…CHGEGRVEEY (79 aa). Residues C146, C149, C163, C166, C185, C188, C199, and C202 each contribute to the Zn(2+) site. 4 CXXCXGXG motif repeats span residues 146 to 153, 163 to 170, 185 to 192, and 199 to 206; these read CKPCDGSG, CPTCGGIG, CPRCHGQG, and CDSCHGEG.

The protein belongs to the DnaJ family. As to quaternary structure, homodimer. The cofactor is Zn(2+).

Its subcellular location is the cytoplasm. In terms of biological role, participates actively in the response to hyperosmotic and heat shock by preventing the aggregation of stress-denatured proteins and by disaggregating proteins, also in an autonomous, DnaK-independent fashion. Unfolded proteins bind initially to DnaJ; upon interaction with the DnaJ-bound protein, DnaK hydrolyzes its bound ATP, resulting in the formation of a stable complex. GrpE releases ADP from DnaK; ATP binding to DnaK triggers the release of the substrate protein, thus completing the reaction cycle. Several rounds of ATP-dependent interactions between DnaJ, DnaK and GrpE are required for fully efficient folding. Also involved, together with DnaK and GrpE, in the DNA replication of plasmids through activation of initiation proteins. This is Chaperone protein DnaJ from Pseudomonas fluorescens (strain ATCC BAA-477 / NRRL B-23932 / Pf-5).